An 88-amino-acid polypeptide reads, in one-letter code: uncharacterized protein (88 aa).

The chain crosses the membrane as a helical span at residues 34 to 54 (IIIAVILIFFLTIVGLFYLII).

Its subcellular location is the membrane. This is an uncharacterized protein from Ureaplasma parvum serovar 3 (strain ATCC 700970).